The primary structure comprises 464 residues: GTPase Der (464 aa).

2 EngA-type G domains span residues Pro5–Gly169 and Ile190–His368. Residues Gly11–Ser18, Asp58–Ile62, Asn121–Asp124, Gly196–Ser203, Asp243–Met247, and Asn308–Asp311 contribute to the GTP site. In terms of domain architecture, KH-like spans Asn369 to Val461.

It belongs to the TRAFAC class TrmE-Era-EngA-EngB-Septin-like GTPase superfamily. EngA (Der) GTPase family. In terms of assembly, associates with the 50S ribosomal subunit.

GTPase that plays an essential role in the late steps of ribosome biogenesis. In Akkermansia muciniphila (strain ATCC BAA-835 / DSM 22959 / JCM 33894 / BCRC 81048 / CCUG 64013 / CIP 107961 / Muc), this protein is GTPase Der.